The following is a 191-amino-acid chain: NAD(P)H-dependent FMN reductase LOT6 (191 aa).

Residues Arg11, 94-97 (QYNW), and Tyr124 contribute to the FMN site.

Homodimer.

It is found in the cytoplasm. The protein resides in the nucleus. It carries out the reaction FMNH2 + NADP(+) = FMN + NADPH + 2 H(+). It catalyses the reaction FMNH2 + NAD(+) = FMN + NADH + 2 H(+). Functionally, has several reductase activities that are NAD(P)H-dependent and involve FMN as a cofactor, ferricyanide being the best substrate for reduction. May be involved in ferric iron assimilation. The sequence is that of NAD(P)H-dependent FMN reductase LOT6 (LOT6) from Saccharomyces cerevisiae (strain ATCC 204508 / S288c) (Baker's yeast).